The following is a 322-amino-acid chain: Sideroflexin-1 (322 aa).

Ser-2 carries the post-translational modification N-acetylserine. The Mitochondrial matrix segment spans residues 2-102 (SGELPPNINI…MSAQVPMNMT (101 aa)). Residues 103 to 120 (ITGCMMTFYRTTPAVLFW) form a helical membrane-spanning segment. Residues 121–146 (QWINQSFNAVVNYTNRSGDAPLTVNE) are Mitochondrial intermembrane-facing. The helical transmembrane segment at 147–167 (LGTAYVSATTGAVATALGLNA) threads the bilayer. The Mitochondrial matrix segment spans residues 168–174 (LTKHVSP). A helical membrane pass occupies residues 175-195 (LIGRFVPFAAVAAANCINIPL). Residues 196 to 228 (MRQRELKVGIPVTDENGNRLGESANAAKQAITQ) are Mitochondrial intermembrane-facing. A helical membrane pass occupies residues 229 to 249 (VVVSRILMAAPGMAIPPFIMN). The Mitochondrial matrix portion of the chain corresponds to 250 to 266 (TLEKKAFLKRFPWMSAP). Residues 267–287 (VQVGIVGFCLVFATPLCCALF) traverse the membrane as a helical segment. The Mitochondrial intermembrane segment spans residues 288-322 (PQKSSMSVTSLEAELQARIRETYPELRRVYFNKGL).

Belongs to the sideroflexin family.

It is found in the mitochondrion inner membrane. It carries out the reaction L-serine(in) = L-serine(out). The catalysed reaction is L-alanine(in) = L-alanine(out). It catalyses the reaction L-cysteine(in) = L-cysteine(out). In terms of biological role, amino acid transporter importing serine, an essential substrate of the mitochondrial branch of the one-carbon pathway, into mitochondria. Mitochondrial serine is then converted to glycine and formate, which exits to the cytosol where it is used to generate the charged folates that serve as one-carbon donors. May also transport other amino acids including alanine and cysteine. The chain is Sideroflexin-1 (SFXN1) from Bos taurus (Bovine).